The chain runs to 227 residues: MGYQLFEFENLKDCHKALTERFKEFFNTALKKHHQISIAFSGGRSPISLLQKLSVLNLKWHECLISLVDERIIDTSHDDSNTKLLHDYLLQNNALKASFIPLLPEKISSDTNALFNFANQHFKQPHLAILGMGTDGHTASLFPETSAFLNEEKENIVLTKPINAPYERLSMSVNALENCEKLFLSISGVEKRGVLEKALKENAPYSLPIARILHSQKVTTEVFYAKN.

This sequence belongs to the glucosamine/galactosamine-6-phosphate isomerase family. 6-phosphogluconolactonase subfamily.

It catalyses the reaction 6-phospho-D-glucono-1,5-lactone + H2O = 6-phospho-D-gluconate + H(+). Its pathway is carbohydrate degradation; pentose phosphate pathway; D-ribulose 5-phosphate from D-glucose 6-phosphate (oxidative stage): step 2/3. Hydrolysis of 6-phosphogluconolactone to 6-phosphogluconate. The sequence is that of 6-phosphogluconolactonase (pgl) from Helicobacter pylori (strain ATCC 700392 / 26695) (Campylobacter pylori).